Here is a 557-residue protein sequence, read N- to C-terminus: MSISGAVDEAGTPLLAVTVDYRNKPAVKSSSGGWRSAGFIIGVEVAERFAYYGISSNLITYLTGPLGQSTAAAAANVNAWSGTASLLPLLGAFVADSFLGRFRTILAASALYIVGLGVLTLSAMIPSDCKVSNLLSSCSPRFQVITFFSALYLVALAQGGHKPCVQAFGADQFDEKEPEECKAKSSFFNWWYFGMCFGTLTTLWVLNYIQDNLSWALGFGIPCIAMVVALVVLLLGTCTYRFSIRREDQSPFVRIGNVYVAAVKNWSVSALDVAAAEERLGLVSCSSSQQFSFLNKALVAKNGSCSIDELEEAKSVLRLAPIWLTCLVYAVVFAQSPTFFTKQGATMERSITPGYKISPATLQSFISLSIVIFIPIYDRVLIPIARSFTHKPGGITMLQRIGTGIFLSFLAMVVAALVEMKRLKTAADYGLVDSPDATVPMSVWWLVPQYVLFGITDVFAMVGLQEFFYDQVPNELRSVGLALYLSIFGIGNFLSSFMISIIEKATSQSGQASWFANNLNQAHLDYFYWLLACLSFIGLASYLYVAKSYVSKRLDTS.

Helical transmembrane passes span 49–67 and 79–99; these read FAYY…GPLG and AWSG…DSFL. At threonine 104 the chain carries Phosphothreonine. The next 10 helical transmembrane spans lie at 105–125, 144–164, 186–206, 215–235, 320–340, 365–385, 401–421, 443–463, 479–499, and 526–546; these read ILAA…SAMI, VITF…HKPC, SFFN…LWVL, WALG…VLLL, APIW…PTFF, FISL…IPIA, IGTG…VEMK, VWWL…AMVG, VGLA…SFMI, and YFYW…LYVA.

This sequence belongs to the major facilitator superfamily. Proton-dependent oligopeptide transporter (POT/PTR) (TC 2.A.17) family. In terms of tissue distribution, expressed in shoots, roots and stems. Detected in leaves, flowers and siliques.

The protein localises to the membrane. This chain is Protein NRT1/ PTR FAMILY 5.10 (NPF5.10), found in Arabidopsis thaliana (Mouse-ear cress).